The chain runs to 332 residues: MKLLKLTLISTALFSTAALAQAQQSVNVYSYDSFTSEWGAGPKVKQDFEKAHPQCAINFTPFESVGVLLNRVRLEGKKTKADIVLGLDNFFLEQAEKTGIFAPNNVDLTQLDLPTKWANKTFLPFDFGNYAFVYDKTKLQNPPKSLKELVERQDLSVIYQDPRTSSVGRGLLVWMNAVYPADKIQSAWKELDKHTVTVGKGWSDTYGAFLKGEADLVLSYSTSPLYHQLFEKKDNYAATDFAEGHITQVELAARVANHPNQCADDFMAFLISPTAQKHIVTANIMLPVIQGEIEPHFDALKVQQKTQTSINPMVNTEQLKNWISTWQTTLTK.

Positions 1-20 (MKLLKLTLISTALFSTAALA) are cleaved as a signal peptide. Residues tryptophan 202 and 220–223 (YSTS) each bind thiamine.

It belongs to the bacterial solute-binding protein 1 family. As to quaternary structure, the complex is composed of two ATP-binding proteins (ThiQ), two transmembrane proteins (ThiP) and a solute-binding protein (ThiB).

It localises to the periplasm. Part of the ABC transporter complex ThiBPQ involved in thiamine import. The polypeptide is Thiamine-binding periplasmic protein (thiB) (Haemophilus influenzae (strain ATCC 51907 / DSM 11121 / KW20 / Rd)).